The primary structure comprises 331 residues: Cathepsin 7 (331 aa).

The signal sequence occupies residues 1–17; the sequence is MTVAVFLAILCLRAALA. Positions 18 to 111 are cleaved as a propeptide — activation peptide; the sequence is APRPDYSLDA…GKHIQKRNVK (94 aa). The short motif at 33-50 is the Nuclear localization signal element; sequence KRNNAKTYSPEEEKQRRA. An N-linked (GlcNAc...) asparagine glycan is attached at Asn-72. 3 cysteine pairs are disulfide-bonded: Cys-133/Cys-176, Cys-167/Cys-209, and Cys-267/Cys-320. The active site involves Cys-136. Residues His-274 and Asn-298 contribute to the active site.

This sequence belongs to the peptidase C1 family.

It is found in the endosome. The protein localises to the lysosome. The protein resides in the cytoplasm. It localises to the perinuclear region. Its subcellular location is the golgi apparatus. It is found in the nucleus. The protein localises to the secreted. The protein resides in the extracellular space. Functionally, involved in trophoblast cell proliferation and differentiation probably by affecting mitotic cell cycle progression. Proteolytic activity and nuclear localization are essential for its role in cell cycle progression. The sequence is that of Cathepsin 7 (Cts7) from Rattus norvegicus (Rat).